Here is a 284-residue protein sequence, read N- to C-terminus: Homeobox protein SMOX-5 (284 aa).

The homeobox DNA-binding region spans 37–96; the sequence is RRKTRTTFSNCQLNELENNFNRQRYLTPTDRDRIAKHLGLTNTQVITWFQNRRAKLKREA. The segment at 117–172 is disordered; that stretch reads LSLSDHDHEETQIDDENEQGDNNNDDDGDDNDVEEDDGEEQEKNHTKYLTQPPSIS. Acidic residues predominate over residues 128 to 156; sequence QIDDENEQGDNNNDDDGDDNDVEEDDGEE.

It localises to the nucleus. The chain is Homeobox protein SMOX-5 (SMOX-5) from Schistosoma mansoni (Blood fluke).